The following is a 214-amino-acid chain: Alpha-S1-casein (214 aa).

An N-terminal signal peptide occupies residues 1 to 15 (MKLLILTCLVAVALA). A disordered region spans residues 59-91 (IGSESTEDQAMEDAKQMKAGSSSSSEEIVPNSA). S61, S63, S79, S80, S81, S82, S83, S90, and S130 each carry phosphoserine.

Belongs to the alpha-casein family. In terms of tissue distribution, mammary gland specific. Secreted in milk.

The protein localises to the secreted. Functionally, important role in the capacity of milk to transport calcium phosphate. The chain is Alpha-S1-casein (CSN1S1) from Capra hircus (Goat).